Consider the following 186-residue polypeptide: Large ribosomal subunit protein uL5 (186 aa).

This sequence belongs to the universal ribosomal protein uL5 family. In terms of assembly, part of the 50S ribosomal subunit; part of the 5S rRNA/L5/L18/L25 subcomplex. Contacts the 5S rRNA and the P site tRNA. Forms a bridge to the 30S subunit in the 70S ribosome.

In terms of biological role, this is one of the proteins that bind and probably mediate the attachment of the 5S RNA into the large ribosomal subunit, where it forms part of the central protuberance. In the 70S ribosome it contacts protein S13 of the 30S subunit (bridge B1b), connecting the 2 subunits; this bridge is implicated in subunit movement. Contacts the P site tRNA; the 5S rRNA and some of its associated proteins might help stabilize positioning of ribosome-bound tRNAs. The chain is Large ribosomal subunit protein uL5 from Mycoplasmopsis synoviae (strain 53) (Mycoplasma synoviae).